We begin with the raw amino-acid sequence, 286 residues long: ATP synthase gamma chain (286 aa).

It belongs to the ATPase gamma chain family. As to quaternary structure, F-type ATPases have 2 components, CF(1) - the catalytic core - and CF(0) - the membrane proton channel. CF(1) has five subunits: alpha(3), beta(3), gamma(1), delta(1), epsilon(1). CF(0) has three main subunits: a, b and c.

It is found in the cell inner membrane. Its function is as follows. Produces ATP from ADP in the presence of a proton gradient across the membrane. The gamma chain is believed to be important in regulating ATPase activity and the flow of protons through the CF(0) complex. The sequence is that of ATP synthase gamma chain from Shewanella loihica (strain ATCC BAA-1088 / PV-4).